Reading from the N-terminus, the 47-residue chain is uncharacterized protein (47 aa).

The 46-residue stretch at 2–47 (LRVRKRDGRLEEFSRAKIVRTCLRAGASKKIAEKVAEELKRGYTMG) folds into the ATP-cone domain.

This is an uncharacterized protein from Archaeoglobus fulgidus (strain ATCC 49558 / DSM 4304 / JCM 9628 / NBRC 100126 / VC-16).